Reading from the N-terminus, the 441-residue chain is MAQIFKATKKPLKQQSLVLDITAMDHHGRGIAKHNNKVCFVSNALPNEQVKATIIADKARYSEAQTHKVLQASEYRVAPFCEHYNQCGGCQLQHLDSSQQVVEKQIAVSKLFEKFAKLDELNWQAPLLSKATHYRRSARLAVMFDKKAKKMHVGYRASGSKSIISINECPVLSEVFANVFTVFDNLINQHKALHSVSHLQLCQGDEQNFVIIRHTKPISEDIKALVAQSAAEQQWQLVWQSESEVIEHSHLAMPFYALEELGLKFEFGLNNFIQVNASVNQAMLKQAQNWLALKGDENVLDLFCGIGNFSLVLAKQAKTVIGVEGVASAVAMATQNAHTNSITNAQFNCFDLTNKIETASWFNKNLDVLVLDPSRTGAITVLEQLPLKQFKTILYVSCDPVTLARDSAIISQAGFELHKIGLMNMFPHTGHIETMALFQRR.

One can recognise a TRAM domain in the interval 10–68; the sequence is KPLKQQSLVLDITAMDHHGRGIAKHNNKVCFVSNALPNEQVKATIIADKARYSEAQTHK. Residues Cys81, Cys87, Cys90, and Cys169 each coordinate [4Fe-4S] cluster. Residues Gln274, Phe303, Asn308, Glu324, Asp351, and Asp372 each coordinate S-adenosyl-L-methionine. Cys398 serves as the catalytic Nucleophile.

This sequence belongs to the class I-like SAM-binding methyltransferase superfamily. RNA M5U methyltransferase family. RlmD subfamily.

It carries out the reaction uridine(1939) in 23S rRNA + S-adenosyl-L-methionine = 5-methyluridine(1939) in 23S rRNA + S-adenosyl-L-homocysteine + H(+). In terms of biological role, catalyzes the formation of 5-methyl-uridine at position 1939 (m5U1939) in 23S rRNA. In Pseudoalteromonas translucida (strain TAC 125), this protein is 23S rRNA (uracil(1939)-C(5))-methyltransferase RlmD.